The following is a 230-amino-acid chain: Ropporin-1-like protein (230 aa).

Residues 17 to 54 (PELPDILKQFTKAAIRTQPADVLQWSAGYFSALSRGDP) form the RIIa domain.

The protein belongs to the ropporin family. As to quaternary structure, component of the axonemal radial spoke complex 1 (RS1), at least composed of spoke head proteins RSPH1, RSPH3, RSPH9 and the cilia-specific component RSPH4A or sperm-specific component RSPH6A, spoke stalk proteins RSPH14, DNAJB13, DYDC1, ROPN1L and NME5, and the anchor protein IQUB. May interact with AKAP3. Interacts with FSCB; the interaction increases upon spermatozoa capacitation conditions. Interacts with CFAP61. Sumoylated, sumoylation decreases upon spermatozoa capacitation conditions.

Its subcellular location is the cell projection. The protein resides in the cilium. The protein localises to the flagellum. Its function is as follows. Functions as part of axonemal radial spoke complexes that play an important part in the motility of sperm and cilia. Important for male fertility. With ROPN1, involved in fibrous sheath integrity and sperm motility, plays a role in PKA-dependent signaling processes required for spermatozoa capacitation. The protein is Ropporin-1-like protein (ROPN1L) of Macaca fascicularis (Crab-eating macaque).